A 36-amino-acid chain; its full sequence is Photosystem I reaction center subunit VIII (36 aa).

A helical membrane pass occupies residues Leu6–Leu26.

This sequence belongs to the PsaI family.

It is found in the plastid. Its subcellular location is the chloroplast thylakoid membrane. Functionally, may help in the organization of the PsaL subunit. This Drimys granadensis protein is Photosystem I reaction center subunit VIII.